Here is a 263-residue protein sequence, read N- to C-terminus: Putative hydro-lyase GK2103 (263 aa).

The protein belongs to the D-glutamate cyclase family.

In Geobacillus kaustophilus (strain HTA426), this protein is Putative hydro-lyase GK2103.